A 649-amino-acid chain; its full sequence is tRNA-guanine(15) transglycosylase (649 aa).

D88 functions as the Nucleophile in the catalytic mechanism. D123 and A194 together coordinate substrate. Positions 280, 282, and 285 each coordinate Zn(2+). The PUA domain maps to 573-648; the sequence is KYRIVIDSSV…VAATLRGGLK (76 aa).

It belongs to the archaeosine tRNA-ribosyltransferase family. It depends on Zn(2+) as a cofactor.

The catalysed reaction is guanosine(15) in tRNA + 7-cyano-7-deazaguanine = 7-cyano-7-carbaguanosine(15) in tRNA + guanine. The protein operates within tRNA modification; archaeosine-tRNA biosynthesis. Its function is as follows. Exchanges the guanine residue with 7-cyano-7-deazaguanine (preQ0) at position 15 in the dihydrouridine loop (D-loop) of archaeal tRNAs. The chain is tRNA-guanine(15) transglycosylase from Methanococcus maripaludis (strain DSM 14266 / JCM 13030 / NBRC 101832 / S2 / LL).